Here is a 479-residue protein sequence, read N- to C-terminus: Cardiolipin synthase A (479 aa).

The next 2 helical transmembrane spans lie at 8–28 (FFGYLIGLIHLLGIIAALHAV) and 38–58 (IAWALSLLFIPYFTLIPYLIF). 2 consecutive PLD phosphodiesterase domains span residues 218–245 (VNFRNHRKIVVVDGLRGFLGGHNVGDEY) and 392–419 (QPGFLHQKVVLVDDEVSAIGSANLDNRS). Active-site residues include His-223, Lys-225, Asp-230, His-397, Lys-399, and Asp-404.

This sequence belongs to the phospholipase D family. Cardiolipin synthase subfamily. ClsA sub-subfamily.

Its subcellular location is the cell inner membrane. It catalyses the reaction 2 a 1,2-diacyl-sn-glycero-3-phospho-(1'-sn-glycerol) = a cardiolipin + glycerol. In terms of biological role, catalyzes the reversible phosphatidyl group transfer from one phosphatidylglycerol molecule to another to form cardiolipin (CL) (diphosphatidylglycerol) and glycerol. The chain is Cardiolipin synthase A from Pseudomonas entomophila (strain L48).